Consider the following 141-residue polypeptide: Large ribosomal subunit protein uL11 (141 aa).

The protein belongs to the universal ribosomal protein uL11 family. In terms of assembly, part of the ribosomal stalk of the 50S ribosomal subunit. Interacts with L10 and the large rRNA to form the base of the stalk. L10 forms an elongated spine to which L12 dimers bind in a sequential fashion forming a multimeric L10(L12)X complex. Post-translationally, one or more lysine residues are methylated.

Functionally, forms part of the ribosomal stalk which helps the ribosome interact with GTP-bound translation factors. This chain is Large ribosomal subunit protein uL11, found in Chloroherpeton thalassium (strain ATCC 35110 / GB-78).